Consider the following 121-residue polypeptide: MDLLKVLSQMILFLLFLYLSPLGGHSYPLGSPSQSPEQFKMQKLLELIREKSEEMAQRQLLKDQGLTKEHPKRVLRSQGSTLRVQQRPQNSKVTHISSCFGHKIDRIGSVSRLGCNALKLL.

A signal peptide spans 1–26; it reads MDLLKVLSQMILFLLFLYLSPLGGHS. Residues 61–89 are disordered; it reads LKDQGLTKEHPKRVLRSQGSTLRVQQRPQ. Residues 77-89 show a composition bias toward polar residues; the sequence is SQGSTLRVQQRPQ. A disulfide bridge connects residues Cys99 and Cys115.

The protein belongs to the natriuretic peptide family. The precursor molecule is proteolytically cleaved by the endoprotease Furin to produce brain natriuretic peptide 45. May undergo further proteolytic cleavage by various proteases such as DPP4, MME and possibly FAP, to give rise to a variety of shorter peptides. May be cleaved at Ser-91 by the prolyl endopeptidase FAP (seprase) activity (in vitro). May be degraded by IDE. During IDE degradation, the resulting products initially increase the activation of NPR1 and can also stimulate NPR2 to produce cGMP before the fragments are completely degraded and inactivated by IDE (in vitro). As to expression, expressed abundantly in the ventricle, and in a lesser extent in the atrium (at protein level).

The protein localises to the secreted. Its function is as follows. Cardiac hormone that plays a key role in mediating cardio-renal homeostasis. May also function as a paracrine antifibrotic factor in the heart. Acts by specifically binding and stimulating NPR1 to produce cGMP, which in turn activates effector proteins that drive various biological responses. Likely involved in regulating the extracellular fluid volume and maintaining the fluid-electrolyte balance through natriuresis, diuresis, kaluresis and chloruresis. The polypeptide is Natriuretic peptides B (Nppb) (Mus musculus (Mouse)).